A 950-amino-acid polypeptide reads, in one-letter code: Protocadherin alpha-13 (950 aa).

The first 29 residues, 1–29, serve as a signal peptide directing secretion; it reads MLSSWQGGPRPRQLLLWLLILAAWETGSG. At 30 to 697 the chain is on the extracellular side; the sequence is QLHYSVPEEA…GPEAALVDVN (668 aa). 6 consecutive Cadherin domains span residues 34-133, 134-242, 243-350, 351-455, 456-565, and 581-678; these read SVPE…PPIF, PESK…APEF, YQSV…APEV, TITS…APAF, AQPE…APAL, and MPRS…APQA. Residues asparagine 257 and asparagine 265 are each glycosylated (N-linked (GlcNAc...) asparagine). A glycan (N-linked (GlcNAc...) asparagine) is linked at asparagine 548. The helical transmembrane segment at 698–718 threads the bilayer; that stretch reads VYLIIAICAVSSLLVLTLLLY. Residues 719 to 950 lie on the Cytoplasmic side of the membrane; sequence TALRCSAPPT…GNSTTDNSDQ (232 aa). PXXP repeat units follow at residues 734–737, 774–777, 799–802, 832–835, 873–876, and 891–894; these read PGKP, PSLP, PRQP, PGGP, PGNP, and PGSP. The segment at 734-894 is 6 X 4 AA repeats of P-X-X-P; sequence PGKPTLVCSS…PDKFIIPGSP (161 aa). 2 disordered regions span residues 780-806 and 829-950; these read LGSA…NPDW and RAGP…NSDQ. Residues 787-800 show a composition bias toward basic and acidic residues; it reads GQREEDSECLKEPR. Basic and acidic residues predominate over residues 909–923; that stretch reads DKSDFITFGKKEETK.

Its subcellular location is the cell membrane. In terms of biological role, potential calcium-dependent cell-adhesion protein. May be involved in the establishment and maintenance of specific neuronal connections in the brain. This Homo sapiens (Human) protein is Protocadherin alpha-13 (PCDHA13).